The chain runs to 146 residues: Meiotically up-regulated gene 151 protein (146 aa).

Residues 1–40 (MSLVAYDSEEEEQTSLVNENNDIKGRSEEPHWKIPNSPKA) are disordered. A compositionally biased stretch (basic and acidic residues) spans 21–32 (NDIKGRSEEPHW).

It localises to the nucleus. Functionally, has a role in meiosis. The protein is Meiotically up-regulated gene 151 protein (mug151) of Schizosaccharomyces pombe (strain 972 / ATCC 24843) (Fission yeast).